A 459-amino-acid polypeptide reads, in one-letter code: Bifunctional protein GlmU (459 aa).

The pyrophosphorylase stretch occupies residues 1 to 229 (MSNFAIILAA…FDESLGVNDR (229 aa)). Residues 8–11 (LAAG), Lys-22, Gln-72, and 77–78 (GT) each bind UDP-N-acetyl-alpha-D-glucosamine. Asp-102 contacts Mg(2+). 4 residues coordinate UDP-N-acetyl-alpha-D-glucosamine: Gly-139, Glu-154, Asn-169, and Asn-227. Mg(2+) is bound at residue Asn-227. Residues 230 to 250 (VALATAESVMRRRINHKHMVN) form a linker region. Residues 251–459 (GVSFVNPEAT…TRLPHHPKNQ (209 aa)) are N-acetyltransferase. UDP-N-acetyl-alpha-D-glucosamine-binding residues include Arg-332 and Lys-350. His-362 functions as the Proton acceptor in the catalytic mechanism. The UDP-N-acetyl-alpha-D-glucosamine site is built by Tyr-365 and Asn-376. Acetyl-CoA is bound by residues Ala-379, 385–386 (NY), Ser-404, Ala-422, and Arg-439.

The protein in the N-terminal section; belongs to the N-acetylglucosamine-1-phosphate uridyltransferase family. This sequence in the C-terminal section; belongs to the transferase hexapeptide repeat family. As to quaternary structure, homotrimer. The cofactor is Mg(2+).

It is found in the cytoplasm. The catalysed reaction is alpha-D-glucosamine 1-phosphate + acetyl-CoA = N-acetyl-alpha-D-glucosamine 1-phosphate + CoA + H(+). It carries out the reaction N-acetyl-alpha-D-glucosamine 1-phosphate + UTP + H(+) = UDP-N-acetyl-alpha-D-glucosamine + diphosphate. It functions in the pathway nucleotide-sugar biosynthesis; UDP-N-acetyl-alpha-D-glucosamine biosynthesis; N-acetyl-alpha-D-glucosamine 1-phosphate from alpha-D-glucosamine 6-phosphate (route II): step 2/2. It participates in nucleotide-sugar biosynthesis; UDP-N-acetyl-alpha-D-glucosamine biosynthesis; UDP-N-acetyl-alpha-D-glucosamine from N-acetyl-alpha-D-glucosamine 1-phosphate: step 1/1. Its pathway is bacterial outer membrane biogenesis; LPS lipid A biosynthesis. In terms of biological role, catalyzes the last two sequential reactions in the de novo biosynthetic pathway for UDP-N-acetylglucosamine (UDP-GlcNAc). The C-terminal domain catalyzes the transfer of acetyl group from acetyl coenzyme A to glucosamine-1-phosphate (GlcN-1-P) to produce N-acetylglucosamine-1-phosphate (GlcNAc-1-P), which is converted into UDP-GlcNAc by the transfer of uridine 5-monophosphate (from uridine 5-triphosphate), a reaction catalyzed by the N-terminal domain. In Streptococcus pneumoniae (strain 70585), this protein is Bifunctional protein GlmU.